The primary structure comprises 761 residues: BMP/retinoic acid-inducible neural-specific protein 1 (761 aa).

Residues 1 to 19 (MNWRFVELLYFLFIWGRIS) form the signal peptide. The MACPF domain maps to 68–251 (RYKIYREFAR…FVQSALSYIM (184 aa)). N-linked (GlcNAc...) asparagine glycans are attached at residues Asn156, Asn433, Asn443, Asn553, Asn599, Asn631, and Asn677.

This sequence belongs to the BRINP family. As to expression, highly expressed in brain. Weakly expressed in heart, lung, skeletal muscle, kidney, thymus, prostate, testis and small intestine.

It is found in the cytoplasm. Its function is as follows. Plays a role in neurogenesis and brain development. May suppress cell cycle progression in postmitotic neurons by inhibiting G1/S transition. The chain is BMP/retinoic acid-inducible neural-specific protein 1 (BRINP1) from Homo sapiens (Human).